The following is an 870-amino-acid chain: Probable disease resistance protein At1g59620 (870 aa).

An NB-ARC domain is found at 123–432; that stretch reads DKRNMRQTFS…AAEGMPRPRY (310 aa). Residue 167–174 participates in ATP binding; that stretch reads GMGGIGKT. 6 LRR repeats span residues 543-567, 568-590, 703-726, 735-758, 759-786, and 808-833; these read LQLM…IGLL, IHLR…MQNL, MSGI…IYMP, PWHL…ILEK, LLQL…GFPQ, and MPRL…KFIT.

The protein belongs to the disease resistance NB-LRR family.

In terms of biological role, probable disease resistance protein. The chain is Probable disease resistance protein At1g59620 from Arabidopsis thaliana (Mouse-ear cress).